Reading from the N-terminus, the 798-residue chain is Copalyl diphosphate synthase 1, chloroplastic (798 aa).

The N-terminal 72 residues, Met1–Ala72, are a transit peptide targeting the chloroplast. Lys251 is a binding site for substrate. Positions 383 and 385 each coordinate Mg(2+). The DXDD motif signature appears at Asp383–Asp386. Lys469 is a binding site for substrate.

It belongs to the terpene synthase family. Tpsc subfamily. Requires Mg(2+) as cofactor. Highly expressed in roots, and, at low levels, in stems and leaves.

It is found in the plastid. The protein resides in the chloroplast. It catalyses the reaction (2E,6E,10E)-geranylgeranyl diphosphate = (+)-copalyl diphosphate. The protein operates within secondary metabolite biosynthesis; terpenoid biosynthesis. In terms of biological role, involved in the biosynthesis of ent-kaurene diterpenoids natural products such as oridonin, miltiradiene, eriocalyxin B and nezukol, known to exhibit antitumor, anti-inflammatory and antibacterial activities. Catalyzes the conversion of (2E,6E,10E)-geranylgeranyl diphosphate (GGPP) to (+)-copalyl diphosphate ((+)-CPP). This Isodon rubescens (Rabdosia rubescens) protein is Copalyl diphosphate synthase 1, chloroplastic.